The chain runs to 494 residues: Cytochrome P450 2A11 (494 aa).

Lys379 carries the N6-acetyllysine modification. Residue Cys439 participates in heme binding.

This sequence belongs to the cytochrome P450 family. Heme is required as a cofactor. Expressed in liver and lung as well as in nasal tissues.

It localises to the endoplasmic reticulum membrane. Its subcellular location is the microsome membrane. It carries out the reaction an organic molecule + reduced [NADPH--hemoprotein reductase] + O2 = an alcohol + oxidized [NADPH--hemoprotein reductase] + H2O + H(+). Catalyzes the oxygenation of a variety of substrates, including ethanol and procarcinogens such as N-nitrosodiethylamine and phenacetin. Has no or little activity as a coumarin 7-hydroxylase and in the formation of androstenedione from testosterone. The chain is Cytochrome P450 2A11 (CYP2A11) from Oryctolagus cuniculus (Rabbit).